The primary structure comprises 185 residues: Probable nicotinate-nucleotide adenylyltransferase (185 aa).

This sequence belongs to the NadD family.

It catalyses the reaction nicotinate beta-D-ribonucleotide + ATP + H(+) = deamido-NAD(+) + diphosphate. It functions in the pathway cofactor biosynthesis; NAD(+) biosynthesis; deamido-NAD(+) from nicotinate D-ribonucleotide: step 1/1. Functionally, catalyzes the reversible adenylation of nicotinate mononucleotide (NaMN) to nicotinic acid adenine dinucleotide (NaAD). This Methylorubrum extorquens (strain CM4 / NCIMB 13688) (Methylobacterium extorquens) protein is Probable nicotinate-nucleotide adenylyltransferase.